Here is a 418-residue protein sequence, read N- to C-terminus: Gene 68 protein (418 aa).

Disordered stretches follow at residues 230–304 (IPAP…IHTL) and 353–418 (DTFE…ERRA). Basic and acidic residues predominate over residues 241–250 (RPSEGGDARP). The span at 257-266 (SRARSVHGRR) shows a compositional bias: basic residues. The span at 353 to 369 (DTFEDNRRDELRHDDSR) shows a compositional bias: basic and acidic residues. The span at 395 to 404 (PHLRRSRGRG) shows a compositional bias: basic residues.

Belongs to the herpesviridae US2 family.

The sequence is that of Gene 68 protein from Equine herpesvirus 1 (strain Ab4p) (EHV-1).